A 404-amino-acid chain; its full sequence is Probable protein phosphatase 1N (404 aa).

The PPM-type phosphatase domain maps to 59 to 319 (RFGASAVQGW…DNMTCMVVCF (261 aa)). The Mn(2+) site is built by Asp-96, Gly-97, Asp-267, and Asp-310.

It belongs to the PP2C family. It depends on Mg(2+) as a cofactor. Requires Mn(2+) as cofactor.

It carries out the reaction O-phospho-L-seryl-[protein] + H2O = L-seryl-[protein] + phosphate. The catalysed reaction is O-phospho-L-threonyl-[protein] + H2O = L-threonyl-[protein] + phosphate. The chain is Probable protein phosphatase 1N (Ppm1n) from Mus musculus (Mouse).